The primary structure comprises 292 residues: MRAIWTGAITFGLVNVPVKVYSATEDHDVPLQPLHAADGGRIRYQRRCEIDGKVIPYEDIARAYDDGERMVVLTPEDLASLPAERSREIDVVEFVPDEQLDPLTFDRSYYLEPDSRSVKAYALLRTTLEDGCRTAIVTVALRQKTRLGALRVRGNLLVLQTLLWHDEIRAAAFPSLETVPPITERELALSSALMESFAGDFQPETFADEYQEELRKLIAAKIEQGESVDVAETFGEGAAPAGGGAVIDLMEALQRSVERSGGKAASAFPAAEKAPAGKNAATASAKKARKLA.

The Ku domain occupies 9–187 (ITFGLVNVPV…TVPPITEREL (179 aa)). A compositionally biased stretch (low complexity) spans 264-285 (AASAFPAAEKAPAGKNAATASA). The segment at 264–292 (AASAFPAAEKAPAGKNAATASAKKARKLA) is disordered.

Belongs to the prokaryotic Ku family. As to quaternary structure, homodimer. Interacts with LigD.

Functionally, with LigD forms a non-homologous end joining (NHEJ) DNA repair enzyme, which repairs dsDNA breaks with reduced fidelity. Binds linear dsDNA with 5'- and 3'- overhangs but not closed circular dsDNA nor ssDNA. Recruits and stimulates the ligase activity of LigD. This chain is Non-homologous end joining protein Ku, found in Leifsonia xyli subsp. xyli (strain CTCB07).